The following is a 369-amino-acid chain: MKLEASCGTATSEVPKPEKKTARDAEPSSETRPQEVEAEPRSGSGPEAEAEPLDFVVATEREFEEVLAISGGIYGGLDYLPSRYHSWLRDPDRTVVLAKRNGGVIALESVNVIDAGETVLVEGLRVAPWERGKGVAGLLQRFCSQLVKRQHPGVKVARLTRDDQLGPRELKKYRLITKQGILLVRFNASALLAGLGARLAALRTSGTFSPLPTEAVSEAGGDVARLLLSPSVQRDVLPGGTIIQDWQPYRPSESNLRLLAAKGLEWRVDSRARPRVLTLCTRPFPIPHGGDGTWRYLNIDAFGSDGAQVQSQLLWHLQRQAPRLVGLNVMCQLFLEPQLWSQLADFCQVGLGLELVKGYTEQYLLEADI.

The interval 1–49 (MKLEASCGTATSEVPKPEKKTARDAEPSSETRPQEVEAEPRSGSGPEAE) is disordered. Residues 15–26 (PKPEKKTARDAE) show a composition bias toward basic and acidic residues. Positions 53–188 (LDFVVATERE…QGILLVRFNA (136 aa)) constitute an N-acetyltransferase domain.

In terms of biological role, probable N-acetyltransferase. Shows only trace activity toward L-His and no N-acetyltransferase activity toward other amino acids. The physiological substrate of this enzyme is unknown. The polypeptide is Probable N-acetyltransferase 16 (NAT16) (Homo sapiens (Human)).